The chain runs to 131 residues: Small ribosomal subunit protein uS8 (131 aa).

The protein belongs to the universal ribosomal protein uS8 family. Part of the 30S ribosomal subunit. Contacts proteins S5 and S12.

One of the primary rRNA binding proteins, it binds directly to 16S rRNA central domain where it helps coordinate assembly of the platform of the 30S subunit. This Helicobacter pylori (strain P12) protein is Small ribosomal subunit protein uS8.